The sequence spans 308 residues: MEKNATLLTEFVLTGLSHQPLWNIPLFLVFLVIYLITIVGNVSLITLIWTDPHLHIPMYLFLGSLAFVDTSISSIVVPKMLLNFFGKSKVITLSECMAQFFLFNISATTECFLLAAMAYDRYVAICKPLLYPVVMTNGLCVWLIALSFVAGIIHALIHEGFLLRLTFCNSNMIHNFYCDIISLLKISCTDTSLNYLIVFIFSGSIQVFTISTILVSYTIILFTILKKKSAKGIKKAFSTCGAHLLSVSLYYGPLLFMYVHPASSEVDDQDMIDSLFYTVIIPVLNPIIYSLRNKQVIDSLAKFLKRNV.

The Extracellular portion of the chain corresponds to 1–27 (MEKNATLLTEFVLTGLSHQPLWNIPLF). N4 carries N-linked (GlcNAc...) asparagine glycosylation. The chain crosses the membrane as a helical span at residues 28–48 (LVFLVIYLITIVGNVSLITLI). Topologically, residues 49–55 (WTDPHLH) are cytoplasmic. Residues 56–76 (IPMYLFLGSLAFVDTSISSIV) form a helical membrane-spanning segment. Over 77–92 (VPKMLLNFFGKSKVIT) the chain is Extracellular. A helical membrane pass occupies residues 93–113 (LSECMAQFFLFNISATTECFL). A disulfide bridge links C96 with C188. The Cytoplasmic portion of the chain corresponds to 114–143 (LAAMAYDRYVAICKPLLYPVVMTNGLCVWL). Residues 144–164 (IALSFVAGIIHALIHEGFLLR) traverse the membrane as a helical segment. Over 165 to 197 (LTFCNSNMIHNFYCDIISLLKISCTDTSLNYLI) the chain is Extracellular. The chain crosses the membrane as a helical span at residues 198 to 218 (VFIFSGSIQVFTISTILVSYT). Residues 219–238 (IILFTILKKKSAKGIKKAFS) lie on the Cytoplasmic side of the membrane. Residues 239-259 (TCGAHLLSVSLYYGPLLFMYV) form a helical membrane-spanning segment. Topologically, residues 260–270 (HPASSEVDDQD) are extracellular. The helical transmembrane segment at 271-291 (MIDSLFYTVIIPVLNPIIYSL) threads the bilayer. Over 292–308 (RNKQVIDSLAKFLKRNV) the chain is Cytoplasmic.

The protein belongs to the G-protein coupled receptor 1 family.

Its subcellular location is the cell membrane. Potential odorant receptor. This chain is Olfactory receptor 5H19, found in Mus musculus (Mouse).